Here is a 234-residue protein sequence, read N- to C-terminus: MSFAEEFEANLVSLAHVLQKKYALLRDLDKSLQENQRQNEQRCEKEIEDIRRGRAGNITPNTSLTKFSEEALDEQKHSVRIADEKVTLAMQAYDLVDMHVQQLDQYMKKSDEVIRKEKEAAAATLELENNGKAGNAGEGGRGGRKKTRLATAASTAAASTGMTSSNMDLDLPVDPNEPTYCICNQVSFGEMVACDNNACKIEWFHFGCVGLKEQPKGKWYCPECATVKKSRKGR.

Positions 129 to 166 (NNGKAGNAGEGGRGGRKKTRLATAASTAAASTGMTSSN) are disordered. Positions 149–165 (LATAASTAAASTGMTSS) are enriched in low complexity. A PHD-type zinc finger spans residues 178-227 (PTYCICNQVSFGEMVACDNNACKIEWFHFGCVGLKEQPKGKWYCPECATV). Zn(2+) is bound by residues C181, C183, C194, C199, H205, C208, C221, and C224.

This sequence belongs to the ING family. As to quaternary structure, interacts with H3K4me3 and to a lesser extent with H3K4me2. As to expression, ubiquitously expressed.

It is found in the nucleus. Its function is as follows. Histone-binding component that specifically recognizes H3 tails trimethylated on 'Lys-4' (H3K4me3), which mark transcription start sites of virtually all active genes. The sequence is that of PHD finger protein ING1 (ING1) from Arabidopsis thaliana (Mouse-ear cress).